We begin with the raw amino-acid sequence, 85 residues long: Large ribosomal subunit protein bL27 (85 aa).

Positions Met-1 to Leu-21 are disordered.

It belongs to the bacterial ribosomal protein bL27 family.

The polypeptide is Large ribosomal subunit protein bL27 (Erwinia tasmaniensis (strain DSM 17950 / CFBP 7177 / CIP 109463 / NCPPB 4357 / Et1/99)).